We begin with the raw amino-acid sequence, 215 residues long: Adenylate kinase (215 aa).

10 to 15 (GAGKGT) contacts ATP. The tract at residues 30-59 (STGDILRENVKNQTELGKKAKEYMDKGLLV) is NMP. Residues T31, R36, 57-59 (LLV), 85-88 (GFPR), and Q92 contribute to the AMP site. Residues 126–163 (GRRICKSCGASFHVVYRPPKKEGICDICGGQLYQREDD) form an LID region. R127 is an ATP binding site. The Zn(2+) site is built by C130 and C133. 136–137 (SF) contributes to the ATP binding site. Zn(2+)-binding residues include C150 and C153. The AMP site is built by R160 and R171. Residue E199 participates in ATP binding.

Belongs to the adenylate kinase family. In terms of assembly, monomer.

The protein resides in the cytoplasm. It catalyses the reaction AMP + ATP = 2 ADP. The protein operates within purine metabolism; AMP biosynthesis via salvage pathway; AMP from ADP: step 1/1. Catalyzes the reversible transfer of the terminal phosphate group between ATP and AMP. Plays an important role in cellular energy homeostasis and in adenine nucleotide metabolism. This Caldicellulosiruptor saccharolyticus (strain ATCC 43494 / DSM 8903 / Tp8T 6331) protein is Adenylate kinase.